A 1079-amino-acid chain; its full sequence is Tudor domain-containing protein 7A (1079 aa).

The region spanning 3–76 (DVELVKKMLR…TGEVMCFAGV (74 aa)) is the HTH OST-type 1 domain. A disordered region spans residues 153 to 175 (LPSSRAPAWQMNRKSPVPEKTSV). 2 HTH OST-type domains span residues 205–270 (DVEL…RLVY) and 366–434 (LTTE…ILYT). 2 consecutive Tudor domains span residues 519-576 (SPKI…FMTL) and 708-765 (RPFC…FLKE).

The protein belongs to the TDRD7 family.

It is found in the cytoplasm. In terms of biological role, component of specific cytoplasmic RNA granules involved in post-transcriptional regulation of specific genes: probably acts by binding to specific mRNAs and regulating their translation. Probably required during spermatogenesis. Required for structural integrity of granules in primordial germ cells (PGCs). The protein is Tudor domain-containing protein 7A (tdrd7a) of Danio rerio (Zebrafish).